The primary structure comprises 71 residues: MIHSNISIQINGEPFNCSKPISLQFLLNYLDFNSERVAVELNDILLPETLFHSTYLNDQDKLEVITIVGGG.

Belongs to the ycf40 family.

It is found in the plastid. It localises to the chloroplast. This is an uncharacterized protein from Pyropia yezoensis (Susabi-nori).